The chain runs to 221 residues: 7-carboxy-7-deazaguanine synthase (221 aa).

Residues 12-14 (ING) and Arg27 contribute to the substrate site. In terms of domain architecture, Radical SAM core spans 18-216 (KSGQLSVFIR…IQIHKIIWNP (199 aa)). [4Fe-4S] cluster is bound by residues Cys31, Cys35, and Cys38. Thr40 contacts Mg(2+). Residue Thr73 participates in substrate binding. Residue Gly75 coordinates S-adenosyl-L-methionine.

This sequence belongs to the radical SAM superfamily. 7-carboxy-7-deazaguanine synthase family. Homodimer. The cofactor is [4Fe-4S] cluster. It depends on S-adenosyl-L-methionine as a cofactor. Requires Mg(2+) as cofactor.

The catalysed reaction is 6-carboxy-5,6,7,8-tetrahydropterin + H(+) = 7-carboxy-7-deazaguanine + NH4(+). Its pathway is purine metabolism; 7-cyano-7-deazaguanine biosynthesis. Its function is as follows. Catalyzes the complex heterocyclic radical-mediated conversion of 6-carboxy-5,6,7,8-tetrahydropterin (CPH4) to 7-carboxy-7-deazaguanine (CDG), a step common to the biosynthetic pathways of all 7-deazapurine-containing compounds. This is 7-carboxy-7-deazaguanine synthase from Clostridium acetobutylicum (strain ATCC 824 / DSM 792 / JCM 1419 / IAM 19013 / LMG 5710 / NBRC 13948 / NRRL B-527 / VKM B-1787 / 2291 / W).